The following is a 523-amino-acid chain: MILYAVLGAFAAFLLYMDVLYPFVIYPLRARWHKCGYIPRDLSWPLGIPLTLVVLSKLRKDMLLQFMAAQDLSRPYKTSLRQFLGKWVIATRDPENIKAVLSTKFNDFSLKERGNRMRHVIGDGIFTQDGAPWKHSRDMLRPQFTKDQISRVELLSHHIDVLIREIRKSGGNVELQRLFHLMTMDTATHFLFGESVGSLEVSGESKGIEITDPKTGEIVNTVDFVESYTFANKFALKKIILNDLEFLADLTEPSYKWHLRRVHTVMDHYVQLALKATEKYDPDDDSEKGEYYFSHELAKLTRDPLSLRDQLFNILIAGRDTTAATLSYAFHYLTKNPAIYAKVREDVLTVFPNGDASLATYEDLRKAKYLQMVIKEVLRLAPAVPLNTRAAVRDTYLPRGGGPAGNLPVFVPKGTAVNYPTYILHRDPDIYGADAYEFNPERWRPENKLPNSPMYSWGYIPFNGGPRICIGQQFALTEIALTMIKLVLEFERLEPADDFEPNLQDKSSLTVMVGGSGVRVKLS.

A helical membrane pass occupies residues 5-25 (AVLGAFAAFLLYMDVLYPFVI). Heme is bound at residue Cys-469.

Belongs to the cytochrome P450 family. Heme serves as cofactor.

The protein resides in the membrane. It carries out the reaction an omega-methyl-long-chain fatty acid + reduced [NADPH--hemoprotein reductase] + O2 = an omega-hydroxy-long-chain fatty acid + oxidized [NADPH--hemoprotein reductase] + H2O + H(+). It catalyses the reaction (9Z,12Z)-octadecadienoate + reduced [NADPH--hemoprotein reductase] + O2 = 18-hydroxy-(9Z,12Z)-octadecadienoate + oxidized [NADPH--hemoprotein reductase] + H2O + H(+). The enzyme catalyses (9Z)-octadecenoate + reduced [NADPH--hemoprotein reductase] + O2 = 18-hydroxy-(9Z)-octadecenoate + oxidized [NADPH--hemoprotein reductase] + H2O + H(+). The catalysed reaction is hexadecanoate + reduced [NADPH--hemoprotein reductase] + O2 = 16-hydroxyhexadecanoate + oxidized [NADPH--hemoprotein reductase] + H2O + H(+). It carries out the reaction (9Z)-hexadecenoate + reduced [NADPH--hemoprotein reductase] + O2 = (9Z)-16-hydroxyhexadec-9-enoate + oxidized [NADPH--hemoprotein reductase] + H2O + H(+). It catalyses the reaction octadecanoate + reduced [NADPH--hemoprotein reductase] + O2 = 18-hydroxyoctadecanoate + oxidized [NADPH--hemoprotein reductase] + H2O + H(+). In terms of biological role, catalyzes the terminal (at the omega-position) hydroxylation of a fatty acid. Probably involved in alkane metabolism. Linoleic acid is the preferred substrate, but it acts on various other C-16, C-18 and C-20 saturated and unsaturated fatty acids, namely palmitic, palmitoleic, stearic, oleic, alpha-linoleic, arachidonic and myristic acid. This is Cytochrome P450 52-N1 from Starmerella bombicola (Yeast).